Reading from the N-terminus, the 229-residue chain is Galactonate operon transcriptional repressor (229 aa).

Residues 1 to 71 (MTLNKTDRIV…RYRGAFVAPR (71 aa)) form the HTH gntR-type domain. The H-T-H motif DNA-binding region spans 31–50 (EAELCEEFATSRNIIREVFR). Positions 146, 150, and 195 each coordinate Zn(2+).

In terms of assembly, homodimer.

With respect to regulation, D-galactonate binds DgoR and induces a conformational change in the protein, which decreases its affinity for DNA and consequently derepresses transcription of the dgoRKADT operon. Its function is as follows. Involved in the regulation of D-galactonate metabolism. Represses the expression of the dgoRKADT operon by binding to two closely spaced inverted repeats in the cis-acting element, which overlap with the D-galactonate responsive dgo promoter. Employs a derepression mechanism using D-galactonate as a specific effector molecule. In Escherichia coli (strain K12), this protein is Galactonate operon transcriptional repressor.